The sequence spans 94 residues: Co-chaperonin GroES (94 aa).

The protein belongs to the GroES chaperonin family. In terms of assembly, heptamer of 7 subunits arranged in a ring. Interacts with the chaperonin GroEL.

It localises to the cytoplasm. Its function is as follows. Together with the chaperonin GroEL, plays an essential role in assisting protein folding. The GroEL-GroES system forms a nano-cage that allows encapsulation of the non-native substrate proteins and provides a physical environment optimized to promote and accelerate protein folding. GroES binds to the apical surface of the GroEL ring, thereby capping the opening of the GroEL channel. This is Co-chaperonin GroES from Bacillus pumilus (strain SAFR-032).